The following is a 530-amino-acid chain: Glutamate--tRNA ligase (530 aa).

The short motif at 26–36 (PSPTGKAHIGT) is the 'HIGH' region element. Residues 267–271 (KLSKR) carry the 'KMSKS' region motif. Lys270 provides a ligand contact to ATP.

This sequence belongs to the class-I aminoacyl-tRNA synthetase family. Glutamate--tRNA ligase type 1 subfamily. In terms of assembly, monomer.

The protein resides in the cytoplasm. The enzyme catalyses tRNA(Glu) + L-glutamate + ATP = L-glutamyl-tRNA(Glu) + AMP + diphosphate. Catalyzes the attachment of glutamate to tRNA(Glu) in a two-step reaction: glutamate is first activated by ATP to form Glu-AMP and then transferred to the acceptor end of tRNA(Glu). This is Glutamate--tRNA ligase from Gloeobacter violaceus (strain ATCC 29082 / PCC 7421).